A 182-amino-acid polypeptide reads, in one-letter code: Isopentenyl-diphosphate Delta-isomerase (182 aa).

2 residues coordinate Mn(2+): His-25 and His-32. In terms of domain architecture, Nudix hydrolase spans 30-164; sequence LLHLAFSSWL…PWAFSPWMVM (135 aa). The active site involves Cys-67. His-69 is a binding site for Mn(2+). Glu-87 provides a ligand contact to Mg(2+). 2 residues coordinate Mn(2+): Glu-114 and Glu-116. Glu-116 is an active-site residue.

Belongs to the IPP isomerase type 1 family. Homodimer. It depends on Mg(2+) as a cofactor. Requires Mn(2+) as cofactor.

The protein resides in the cytoplasm. The enzyme catalyses isopentenyl diphosphate = dimethylallyl diphosphate. It functions in the pathway isoprenoid biosynthesis; dimethylallyl diphosphate biosynthesis; dimethylallyl diphosphate from isopentenyl diphosphate: step 1/1. In terms of biological role, catalyzes the 1,3-allylic rearrangement of the homoallylic substrate isopentenyl (IPP) to its highly electrophilic allylic isomer, dimethylallyl diphosphate (DMAPP). This is Isopentenyl-diphosphate Delta-isomerase from Escherichia coli O45:K1 (strain S88 / ExPEC).